A 1493-amino-acid chain; its full sequence is Myosin-13 (1493 aa).

The Myosin N-terminal SH3-like domain maps to 18–67; that stretch reads KVGSIVWVQDPEEAWIDGEVVEVNGEDIKVQCTSGKTVVAKGSNTYPKDM. The 670-residue stretch at 72-741 folds into the Myosin motor domain; that stretch reads SGVDDMTTLA…QMAELDDRRT (670 aa). ATP-binding positions include 166–173 and 219–227; these read GESGAGKT and NNNSSRFGK. Actin-binding stretches follow at residues 504–538, 540–563, 598–622, and 622–644; these read LIEK…YETL, DNKY…AGDV, FPPL…KQQL, and LASL…KPNN. IQ domains follow at residues 744–773, 767–796, 792–821, 813–842, 836–865, and 859–888; these read LGRA…AAIN, LRNA…EAAA, REAA…VTVQ, YIEA…ATTV, KTKA…AAIT, and LKKA…DARD. Positions 889-1057 form a coiled coil; the sequence is TVVLQAAKSM…NFLKESVLTT (169 aa). Residues 1085–1114 form a disordered region; sequence QLSGAEFTTPPRIQESGSDTKSRGSHIDPQ. Residues 1102–1114 are compositionally biased toward basic and acidic residues; it reads SDTKSRGSHIDPQ. The region spanning 1161–1444 is the Dilute domain; the sequence is DRLVQMIGSA…IASMTGVMTD (284 aa).

It belongs to the TRAFAC class myosin-kinesin ATPase superfamily. Myosin family. Plant myosin class XI subfamily. Homodimer.

Myosin heavy chain that is required for the cell cycle-regulated transport of various organelles and proteins for their segregation. Functions by binding with its tail domain to receptor proteins on organelles and exerting force with its N-terminal motor domain against actin filaments, thereby transporting its cargo along polarized actin cables. In Arabidopsis thaliana (Mouse-ear cress), this protein is Myosin-13 (XI-G).